A 544-amino-acid polypeptide reads, in one-letter code: Chaperonin GroEL 1 (544 aa).

ATP-binding positions include 29-32, Lys-50, 86-90, Gly-414, and Asp-494; these read TLGP and DGTTT.

Belongs to the chaperonin (HSP60) family. Forms a cylinder of 14 subunits composed of two heptameric rings stacked back-to-back. Interacts with the co-chaperonin GroES.

Its subcellular location is the cytoplasm. It carries out the reaction ATP + H2O + a folded polypeptide = ADP + phosphate + an unfolded polypeptide.. Together with its co-chaperonin GroES, plays an essential role in assisting protein folding. The GroEL-GroES system forms a nano-cage that allows encapsulation of the non-native substrate proteins and provides a physical environment optimized to promote and accelerate protein folding. This chain is Chaperonin GroEL 1, found in Psychromonas ingrahamii (strain DSM 17664 / CCUG 51855 / 37).